The sequence spans 335 residues: Foldase protein PrsA (335 aa).

The signal sequence occupies residues 1-20; sequence MKKKIFAGAVTLLSVAVLAA. Residue cysteine 21 is the site of N-palmitoyl cysteine attachment. Cysteine 21 is lipidated: S-diacylglycerol cysteine. Positions 142–239 constitute a PpiC domain; the sequence is TPEVTAQIIK…ASYYIVKLVK (98 aa). Residues 300 to 335 are disordered; sequence TGSSTSSSSAASSSKTSESSSAAESSSKEASSSAAE. The segment covering 302–335 has biased composition (low complexity); the sequence is SSTSSSSAASSSKTSESSSAAESSSKEASSSAAE.

The protein belongs to the PrsA family.

The protein localises to the cell membrane. It catalyses the reaction [protein]-peptidylproline (omega=180) = [protein]-peptidylproline (omega=0). Its function is as follows. Plays a major role in protein secretion by helping the post-translocational extracellular folding of several secreted proteins. This is Foldase protein PrsA from Streptococcus sanguinis (strain SK36).